Consider the following 202-residue polypeptide: Adenylyl-sulfate kinase (202 aa).

Position 31-38 (31-38) interacts with ATP; it reads GLSASGKS. Catalysis depends on Ser-105, which acts as the Phosphoserine intermediate.

This sequence belongs to the APS kinase family.

The enzyme catalyses adenosine 5'-phosphosulfate + ATP = 3'-phosphoadenylyl sulfate + ADP + H(+). The protein operates within sulfur metabolism; hydrogen sulfide biosynthesis; sulfite from sulfate: step 2/3. Catalyzes the synthesis of activated sulfate. The chain is Adenylyl-sulfate kinase (MET14) from Saccharomyces cerevisiae (strain ATCC 204508 / S288c) (Baker's yeast).